We begin with the raw amino-acid sequence, 107 residues long: ATP synthase peripheral stalk subunit F6, mitochondrial (107 aa).

Residues 1–31 constitute a mitochondrion transit peptide; sequence MILQRLFRFSVIRSAVSVYLRRNIGVTAVAF. N6-acetyllysine occurs at positions 40, 45, and 78. N6-acetyllysine; alternate is present on residues lysine 93 and lysine 98. Lysine 93 and lysine 98 each carry N6-succinyllysine; alternate. Lysine 104 carries the post-translational modification N6-acetyllysine.

The protein belongs to the eukaryotic ATPase subunit F6 family. As to quaternary structure, component of the ATP synthase complex composed at least of ATP5F1A/subunit alpha, ATP5F1B/subunit beta, ATP5MC1/subunit c (homooctomer), MT-ATP6/subunit a, MT-ATP8/subunit 8, ATP5ME/subunit e, ATP5MF/subunit f, ATP5MG/subunit g, ATP5MK/subunit k, ATP5MJ/subunit j, ATP5F1C/subunit gamma, ATP5F1D/subunit delta, ATP5F1E/subunit epsilon, ATP5PF/subunit F6, ATP5PB/subunit b, ATP5PD/subunit d, ATP5PO/subunit OSCP. ATP synthase complex consists of a soluble F(1) head domain (subunits alpha(3) and beta(3)) - the catalytic core - and a membrane F(0) domain - the membrane proton channel (subunits c, a, 8, e, f, g, k and j). These two domains are linked by a central stalk (subunits gamma, delta, and epsilon) rotating inside the F1 region and a stationary peripheral stalk (subunits F6, b, d, and OSCP).

The protein resides in the mitochondrion. It is found in the mitochondrion inner membrane. Functionally, subunit F6, of the mitochondrial membrane ATP synthase complex (F(1)F(0) ATP synthase or Complex V) that produces ATP from ADP in the presence of a proton gradient across the membrane which is generated by electron transport complexes of the respiratory chain. ATP synthase complex consist of a soluble F(1) head domain - the catalytic core - and a membrane F(1) domain - the membrane proton channel. These two domains are linked by a central stalk rotating inside the F(1) region and a stationary peripheral stalk. During catalysis, ATP synthesis in the catalytic domain of F(1) is coupled via a rotary mechanism of the central stalk subunits to proton translocation. In vivo, can only synthesize ATP although its ATP hydrolase activity can be activated artificially in vitro. Part of the complex F(0) domain. Part of the complex F(0) domain and the peripheric stalk, which acts as a stator to hold the catalytic alpha(3)beta(3) subcomplex and subunit a/ATP6 static relative to the rotary elements. The sequence is that of ATP synthase peripheral stalk subunit F6, mitochondrial from Pongo abelii (Sumatran orangutan).